The sequence spans 181 residues: Endoribonuclease YbeY (181 aa).

Zn(2+) contacts are provided by histidine 115, histidine 119, and histidine 125.

It belongs to the endoribonuclease YbeY family. The cofactor is Zn(2+).

The protein localises to the cytoplasm. In terms of biological role, single strand-specific metallo-endoribonuclease involved in late-stage 70S ribosome quality control and in maturation of the 3' terminus of the 16S rRNA. The protein is Endoribonuclease YbeY of Bifidobacterium adolescentis (strain ATCC 15703 / DSM 20083 / NCTC 11814 / E194a).